A 488-amino-acid chain; its full sequence is GTPase Der (488 aa).

Residues 3–166 enclose the EngA-type G 1 domain; it reads PVVALVGRPN…YALAPYAEAL (164 aa). GTP is bound by residues 9-16, 56-60, and 118-121; these read GRPNVGKS, DTGGI, and NKVD. Positions 168-192 are disordered; it reads LNRDGDDEEEKEEREYTEEEAEAEQ. The span at 172–190 shows a compositional bias: acidic residues; it reads GDDEEEKEEREYTEEEAEA. The region spanning 200–373 is the EngA-type G 2 domain; it reads IKLAVIGKPN…SVQEAYESAT (174 aa). GTP-binding positions include 206 to 213, 253 to 257, and 318 to 321; these read GKPNVGKS, DTAGV, and NKWD. Residues 374-458 form the KH-like domain; the sequence is RRVSTSMLTR…PIQVRFQDGD (85 aa).

This sequence belongs to the TRAFAC class TrmE-Era-EngA-EngB-Septin-like GTPase superfamily. EngA (Der) GTPase family. In terms of assembly, associates with the 50S ribosomal subunit.

Functionally, GTPase that plays an essential role in the late steps of ribosome biogenesis. This Shewanella woodyi (strain ATCC 51908 / MS32) protein is GTPase Der.